A 513-amino-acid polypeptide reads, in one-letter code: Cytochrome P450 1A2 (513 aa).

Residue serine 68 is glycosylated (O-linked (GlcNAc) serine). Position 456 (cysteine 456) interacts with heme.

Belongs to the cytochrome P450 family. As to quaternary structure, interacts with PGRMC1; the interaction requires PGRMC1 homodimerization. Heme serves as cofactor.

It localises to the endoplasmic reticulum membrane. Its subcellular location is the microsome membrane. It carries out the reaction an organic molecule + reduced [NADPH--hemoprotein reductase] + O2 = an alcohol + oxidized [NADPH--hemoprotein reductase] + H2O + H(+). It catalyses the reaction 17beta-estradiol + reduced [NADPH--hemoprotein reductase] + O2 = 2-hydroxy-17beta-estradiol + oxidized [NADPH--hemoprotein reductase] + H2O + H(+). The catalysed reaction is 17beta-estradiol + reduced [NADPH--hemoprotein reductase] + O2 = 4-hydroxy-17beta-estradiol + oxidized [NADPH--hemoprotein reductase] + H2O + H(+). The enzyme catalyses estrone + reduced [NADPH--hemoprotein reductase] + O2 = 2-hydroxyestrone + oxidized [NADPH--hemoprotein reductase] + H2O + H(+). It carries out the reaction estrone + reduced [NADPH--hemoprotein reductase] + O2 = 4-hydroxyestrone + oxidized [NADPH--hemoprotein reductase] + H2O + H(+). It catalyses the reaction cholesterol + reduced [NADPH--hemoprotein reductase] + O2 = 25-hydroxycholesterol + oxidized [NADPH--hemoprotein reductase] + H2O + H(+). The catalysed reaction is all-trans-retinol + reduced [NADPH--hemoprotein reductase] + O2 = all-trans-retinal + oxidized [NADPH--hemoprotein reductase] + 2 H2O + H(+). The enzyme catalyses all-trans-retinal + reduced [NADPH--hemoprotein reductase] + O2 = all-trans-retinoate + oxidized [NADPH--hemoprotein reductase] + H2O + 2 H(+). It carries out the reaction (5Z,8Z,11Z,14Z)-eicosatetraenoate + reduced [NADPH--hemoprotein reductase] + O2 = (14R,15S)-epoxy-(5Z,8Z,11Z)-eicosatrienoate + oxidized [NADPH--hemoprotein reductase] + H2O + H(+). It catalyses the reaction (5Z,8Z,11Z,14Z)-eicosatetraenoate + reduced [NADPH--hemoprotein reductase] + O2 = (14S,15R)-epoxy-(5Z,8Z,11Z)-eicosatrienoate + oxidized [NADPH--hemoprotein reductase] + H2O + H(+). The catalysed reaction is (5Z,8Z,11Z,14Z,17Z)-eicosapentaenoate + reduced [NADPH--hemoprotein reductase] + O2 = (17R,18S)-epoxy-(5Z,8Z,11Z,14Z)-eicosatetraenoate + oxidized [NADPH--hemoprotein reductase] + H2O + H(+). The enzyme catalyses (4Z,7Z,10Z,13Z,16Z,19Z)-docosahexaenoate + reduced [NADPH--hemoprotein reductase] + O2 = (19R,20S)-epoxy-(4Z,7Z,10Z,13Z,16Z)-docosapentaenoate + oxidized [NADPH--hemoprotein reductase] + H2O + H(+). It carries out the reaction (5S)-hydroperoxy-(6E,8Z,11Z,14Z)-eicosatetraenoate = 5-oxo-(6E,8Z,11Z,14Z)-eicosatetraenoate + H2O. It catalyses the reaction (12S)-hydroperoxy-(5Z,8Z,10E,14Z)-eicosatetraenoate = 12-oxo-(5Z,8Z,10E,14Z)-eicosatetraenoate + H2O. The catalysed reaction is (15S)-hydroperoxy-(5Z,8Z,11Z,13E)-eicosatetraenoate = 15-oxo-(5Z,8Z,11Z,13E)-eicosatetraenoate + H2O. The enzyme catalyses (13S)-hydroperoxy-(9Z,11E)-octadecadienoate = 13-oxo-(9Z,11E)-octadecadienoate + H2O. It carries out the reaction (5Z,8Z,11Z,14Z)-eicosatetraenoate + reduced [NADPH--hemoprotein reductase] + O2 = 13-hydroxy-(5Z,8Z,11Z,14Z)-eicosatetraenoate + oxidized [NADPH--hemoprotein reductase] + H2O + H(+). It catalyses the reaction (5Z,8Z,11Z,14Z)-eicosatetraenoate + reduced [NADPH--hemoprotein reductase] + O2 = 19-hydroxy-(5Z,8Z,11Z,14Z)-eicosatetraenoate + oxidized [NADPH--hemoprotein reductase] + H2O + H(+). The catalysed reaction is (9Z,12Z)-octadecadienoate + reduced [NADPH--hemoprotein reductase] + O2 = 11-hydroxy-(9Z,12Z)-octadecadienoate + oxidized [NADPH--hemoprotein reductase] + H2O + H(+). Its pathway is cofactor metabolism; retinol metabolism. It functions in the pathway steroid metabolism; cholesterol metabolism. The protein operates within lipid metabolism; arachidonate metabolism. Functionally, a cytochrome P450 monooxygenase involved in the metabolism of various endogenous substrates, including fatty acids, steroid hormones and vitamins. Mechanistically, uses molecular oxygen inserting one oxygen atom into a substrate, and reducing the second into a water molecule, with two electrons provided by NADPH via cytochrome P450 reductase (NADPH--hemoprotein reductase). Catalyzes the hydroxylation of carbon-hydrogen bonds. Exhibits high catalytic activity for the formation of hydroxyestrogens from estrone (E1) and 17beta-estradiol (E2), namely 2-hydroxy E1 and E2. Metabolizes cholesterol toward 25-hydroxycholesterol, a physiological regulator of cellular cholesterol homeostasis. May act as a major enzyme for all-trans retinoic acid biosynthesis in the liver. Catalyzes two successive oxidative transformation of all-trans retinol to all-trans retinal and then to the active form all-trans retinoic acid. Primarily catalyzes stereoselective epoxidation of the last double bond of polyunsaturated fatty acids (PUFA), displaying a strong preference for the (R,S) stereoisomer. Catalyzes bisallylic hydroxylation and omega-1 hydroxylation of PUFA. May also participate in eicosanoids metabolism by converting hydroperoxide species into oxo metabolites (lipoxygenase-like reaction, NADPH-independent). Plays a role in the oxidative metabolism of xenobiotics. Catalyzes the N-hydroxylation of heterocyclic amines and the O-deethylation of phenacetin. Metabolizes caffeine via N3-demethylation. The chain is Cytochrome P450 1A2 (Cyp1a2) from Rattus norvegicus (Rat).